The sequence spans 243 residues: MIVIPAIDLKDGQCVRLRQGLMEDTTVFSSNPIEMATQWVEQGARRLHLVDLNGAFEGRPVNSTSITEIVSAFPDLPVQIGGGIRNIKIANTYIEAGVSYLIIGTMAVTDSEFVSELCREFPNKVIVGLDANNGFVATKGWVQKTNLNVVDLSKKFEQDGINSIIYTDIARDGMMQGMNVEAIVNLAKQISIPIIASGGITNIGDIIRLLTEVHFGIMGVITGRAIYEGTLDFKQAQQLCDEN.

Residue aspartate 8 is the Proton acceptor of the active site. The active-site Proton donor is aspartate 130.

Belongs to the HisA/HisF family.

The protein localises to the cytoplasm. It carries out the reaction 1-(5-phospho-beta-D-ribosyl)-5-[(5-phospho-beta-D-ribosylamino)methylideneamino]imidazole-4-carboxamide = 5-[(5-phospho-1-deoxy-D-ribulos-1-ylimino)methylamino]-1-(5-phospho-beta-D-ribosyl)imidazole-4-carboxamide. It participates in amino-acid biosynthesis; L-histidine biosynthesis; L-histidine from 5-phospho-alpha-D-ribose 1-diphosphate: step 4/9. In Vesicomyosocius okutanii subsp. Calyptogena okutanii (strain HA), this protein is 1-(5-phosphoribosyl)-5-[(5-phosphoribosylamino)methylideneamino] imidazole-4-carboxamide isomerase.